A 28-amino-acid chain; its full sequence is Taicatoxin, alpha-neurotoxin-like component (28 aa).

A disulfide bridge links Cys-3 with Cys-21.

The protein belongs to the three-finger toxin family. Long-chain subfamily. Type II alpha-neurotoxin sub-subfamily. As to quaternary structure, heterotrimer composed of this alpha-neurotoxin-like peptide of 8 kDa, a neurotoxic phospholipase of 16 kDa (AC Q7LZG2) and a serine protease inhibitor of 7 kDa (AC B7S4N9) at an approximate stoichiometry of 1:1:4; non-covalently linked. As to expression, expressed by the venom gland.

Its subcellular location is the secreted. Its function is as follows. The heterotrimer blocks the voltage-dependent L-type calcium channels (Cav1/CACNA1) from the heart, and the small conductance calcium-activated potassium channels (KCa2/KCNN) in the chromaffin cells and in the brain. Is very toxic to mice. In Oxyuranus scutellatus scutellatus (Australian taipan), this protein is Taicatoxin, alpha-neurotoxin-like component.